A 528-amino-acid chain; its full sequence is Glucose-6-phosphate isomerase (528 aa).

Catalysis depends on glutamate 322, which acts as the Proton donor. Catalysis depends on residues histidine 351 and lysine 455.

The protein belongs to the GPI family.

The protein localises to the cytoplasm. It carries out the reaction alpha-D-glucose 6-phosphate = beta-D-fructose 6-phosphate. The protein operates within carbohydrate biosynthesis; gluconeogenesis. It functions in the pathway carbohydrate degradation; glycolysis; D-glyceraldehyde 3-phosphate and glycerone phosphate from D-glucose: step 2/4. In terms of biological role, catalyzes the reversible isomerization of glucose-6-phosphate to fructose-6-phosphate. This chain is Glucose-6-phosphate isomerase, found in Nostoc sp. (strain PCC 7120 / SAG 25.82 / UTEX 2576).